Here is a 41-residue protein sequence, read N- to C-terminus: U3-theraphotoxin-Hs1a (41 aa).

Intrachain disulfides connect Cys2-Cys16, Cys9-Cys37, and Cys17-Cys40.

This sequence belongs to the neurotoxin 14 (magi-1) family. 01 (HNTX-16) subfamily. Expressed by the venom gland.

The protein resides in the secreted. Its function is as follows. Intracerebroventricular injection paralyzes mice. Has no effect on voltage-gated sodium currents. This chain is U3-theraphotoxin-Hs1a, found in Cyriopagopus schmidti (Chinese bird spider).